The primary structure comprises 337 residues: Ferredoxin--NADP reductase (337 aa).

7 residues coordinate FAD: Asp-35, Gln-43, Tyr-48, Val-88, Phe-123, Asp-289, and Thr-330.

The protein belongs to the ferredoxin--NADP reductase type 2 family. As to quaternary structure, homodimer. It depends on FAD as a cofactor.

It catalyses the reaction 2 reduced [2Fe-2S]-[ferredoxin] + NADP(+) + H(+) = 2 oxidized [2Fe-2S]-[ferredoxin] + NADPH. This Paramagnetospirillum magneticum (strain ATCC 700264 / AMB-1) (Magnetospirillum magneticum) protein is Ferredoxin--NADP reductase.